Here is a 374-residue protein sequence, read N- to C-terminus: Translocating chain-associated membrane protein 1 (374 aa).

Residues 1-29 (MAIRKKSTKSPPVLSHEFVLQNHADIVSC) lie on the Cytoplasmic side of the membrane. A helical transmembrane segment spans residues 30 to 50 (VAMVFLLGLMFEITAKASIIF). Over 51–76 (VTLQYNVTLPATEEQATESVSLYYYG) the chain is Lumenal. Asparagine 56 is a glycosylation site (N-linked (GlcNAc...) asparagine). A helical transmembrane segment spans residues 77-97 (IKDLATVFFYMLVAIIIHAVI). Topologically, residues 98–121 (QEYMLDKINRRMHFSKTKHSKFNE) are cytoplasmic. A TLC domain is found at 117 to 326 (SKFNESGQLS…NFQLRRWREH (210 aa)). Residues 122-142 (SGQLSAFYLFACVWGTFILIS) traverse the membrane as a helical segment. The Lumenal portion of the chain corresponds to 143 to 159 (ENYISDPTILWRAYPHN). The chain crosses the membrane as a helical span at residues 160–180 (LMTFQMKFFYISQLAYWLHAF). Residues 181 to 192 (PELYFQKTKKED) lie on the Cytoplasmic side of the membrane. The helical transmembrane segment at 193-213 (IPRQLVYIGLYLFHIAGAYLL) threads the bilayer. Residues 214 to 217 (NLNH) are Lumenal-facing. Residues 218–238 (LGLVLLVLHYFVEFLFHISRL) traverse the membrane as a helical segment. The Cytoplasmic segment spans residues 239–251 (FYFSNEKYQKGFS). The helical transmembrane segment at 252 to 272 (LWAVLFVLGRLLTLILSVLTV) threads the bilayer. The Lumenal portion of the chain corresponds to 273–297 (GFGLARAENQKLDFSTGNFNVLAVR). The helical transmembrane segment at 298–318 (IAVLASICVTQAFMMWKFINF) threads the bilayer. The Cytoplasmic segment spans residues 319-374 (QLRRWREHSAFQAPAVKKKPTVTKGRSSKKGTENGVNGTLTSNVADSPRNKKEKSS). The span at 334–347 (VKKKPTVTKGRSSK) shows a compositional bias: basic residues. Residues 334 to 374 (VKKKPTVTKGRSSKKGTENGVNGTLTSNVADSPRNKKEKSS) are disordered. Polar residues predominate over residues 352-363 (NGVNGTLTSNVA). Residue serine 365 is modified to Phosphoserine.

The protein belongs to the TRAM family. In terms of assembly, interacts with SEC61B. May interact with Derlin-1/DERL1. (Microbial infection) Interacts with human cytomegalovirus/HHV-5 proteins US2 and US11. N-glycosylated.

The protein localises to the endoplasmic reticulum membrane. Functionally, involved in the translocation of nascent protein chains into or through the endoplasmic reticulum (ER) membrane by facilitating the proper chain positioning at the SEC61 channel. Regulates the exposure of nascent secretory protein chain to the cytosol during translocation into the ER. May affect the phospholipid bilayer in the vicinity of the lateral gate of the SEC61 channel, thereby facilitating ER protein transport. Intimately associates with transmembrane (TM) domain of nascent membrane proteins during the entire integration process into the ER membrane. Associates with the second TM domain of G-protein-coupled receptor opsin/OPSD nascent chain in the ER membrane, which may facilitate its integration into the membrane. Under conditions of ER stress, participates in the disposal of misfolded ER membrane proteins during the unfolded protein response (UPR), an integrated stress response (ISR) pathway, by selectively retrotranslocating misfolded ER-membrane proteins from the ER into the cytosol where they are ubiquitinated and degraded by the proteasome. In terms of biological role, (Microbial infection) In case of cytomegalovirus infection, participates in US2- and US11-mediated ER-to-cytosol retrotranslocation and subsequent degradation of major histocompatibility complex (MHC) class I heavy chains, thereby decreasing the immune detection by cytotoxic T-cells. The sequence is that of Translocating chain-associated membrane protein 1 from Homo sapiens (Human).